A 545-amino-acid chain; its full sequence is T-complex protein 1 subunit gamma (545 aa).

An N-acetylmethionine modification is found at methionine 1. The disordered stretch occupies residues methionine 1–serine 24. A Phosphoserine modification is found at serine 11. Residue lysine 15 forms a Glycyl lysine isopeptide (Lys-Gly) (interchain with G-Cter in SUMO2) linkage. Glycine 42 serves as a coordination point for ADP. ATP is bound at residue glycine 42. Aspartate 93 contributes to the Mg(2+) binding site. Residues glycine 94, threonine 95, threonine 96, serine 97, threonine 162, and lysine 163 each coordinate ADP. ATP contacts are provided by glycine 94, threonine 95, and threonine 96. Serine 170 is modified (phosphoserine). An N6-acetyllysine modification is found at lysine 222. Phosphoserine occurs at positions 243 and 244. Tyrosine 247 carries the phosphotyrosine modification. Glycyl lysine isopeptide (Lys-Gly) (interchain with G-Cter in SUMO2) cross-links involve residues lysine 248 and lysine 249. Phosphoserine is present on serine 252. A disulfide bridge connects residues cysteine 366 and cysteine 372. Residue lysine 381 forms a Glycyl lysine isopeptide (Lys-Gly) (interchain with G-Cter in SUMO2) linkage. Glycine 411 is an ADP binding site. ATP is bound at residue glycine 411. A phosphothreonine mark is found at threonine 430 and threonine 459. Residues glycine 482, glutamate 483, glutamate 497, and lysine 502 each contribute to the ADP site. Glycine 482 contacts ATP. An ATP-binding site is contributed by glutamate 497. The interval histidine 526–glutamate 545 is disordered.

This sequence belongs to the TCP-1 chaperonin family. In terms of assembly, component of the chaperonin-containing T-complex (TRiC), a hexadecamer composed of two identical back-to-back stacked rings enclosing a protein folding chamber. Each ring is made up of eight different subunits: TCP1/CCT1, CCT2, CCT3, CCT4, CCT5, CCT6A/CCT6, CCT7, CCT8. Interacts with PACRG. Interacts with DNAAF4. Interacts with DLEC1.

The protein resides in the cytoplasm. The catalysed reaction is ATP + H2O = ADP + phosphate + H(+). Functionally, component of the chaperonin-containing T-complex (TRiC), a molecular chaperone complex that assists the folding of actin, tubulin and other proteins upon ATP hydrolysis. The TRiC complex mediates the folding of WRAP53/TCAB1, thereby regulating telomere maintenance. As part of the TRiC complex may play a role in the assembly of BBSome, a complex involved in ciliogenesis regulating transports vesicles to the cilia. The chain is T-complex protein 1 subunit gamma (Cct3) from Rattus norvegicus (Rat).